A 47-amino-acid chain; its full sequence is GVPCLCDSDGPSVRGNTLSGILWLAGCPSGWHNCKAHGPTIGWCCKQ.

3 disulfide bridges follow: cysteine 4–cysteine 44, cysteine 6–cysteine 34, and cysteine 27–cysteine 45.

The protein belongs to the sea anemone sodium channel inhibitory toxin family. Type I subfamily. In terms of tissue distribution, expressed in ectodermal glands. Not expressed in nematocytes.

Its subcellular location is the secreted. Its function is as follows. Binds specifically to voltage-gated sodium channels (Nav), thereby delaying their inactivation during signal transduction. It strongly stimulates mammalian cardiac muscle contraction. Paralyzes the shore crab (C.maenas) by tetanic contractions after intramuscular injection. The protein is Delta-actitoxin-Ael1a of Anthopleura elegantissima (Green aggregating anemone).